Consider the following 321-residue polypeptide: Methionyl-tRNA formyltransferase (321 aa).

Residue 112 to 115 (SILP) participates in (6S)-5,6,7,8-tetrahydrofolate binding.

This sequence belongs to the Fmt family.

It carries out the reaction L-methionyl-tRNA(fMet) + (6R)-10-formyltetrahydrofolate = N-formyl-L-methionyl-tRNA(fMet) + (6S)-5,6,7,8-tetrahydrofolate + H(+). Attaches a formyl group to the free amino group of methionyl-tRNA(fMet). The formyl group appears to play a dual role in the initiator identity of N-formylmethionyl-tRNA by promoting its recognition by IF2 and preventing the misappropriation of this tRNA by the elongation apparatus. This Shewanella pealeana (strain ATCC 700345 / ANG-SQ1) protein is Methionyl-tRNA formyltransferase.